The chain runs to 564 residues: Septation ring formation regulator EzrA (564 aa).

The Extracellular segment spans residues 1 to 4 (MVLY). The helical transmembrane segment at 5 to 23 (IILAIIVIILIAVGVLFYL) threads the bilayer. Topologically, residues 24-564 (RSNKRQIIEK…KHIEEEVIKQ (541 aa)) are cytoplasmic. 5 coiled-coil regions span residues 99 to 138 (SFNA…YKDN), 190 to 223 (DGNY…LIRE), 271 to 300 (LISR…LIEH), 350 to 435 (VRQF…RRLL), and 471 to 550 (VKQL…ESVE).

This sequence belongs to the EzrA family.

The protein localises to the cell membrane. Functionally, negative regulator of FtsZ ring formation; modulates the frequency and position of FtsZ ring formation. Inhibits FtsZ ring formation at polar sites. Interacts either with FtsZ or with one of its binding partners to promote depolymerization. This is Septation ring formation regulator EzrA from Staphylococcus aureus (strain Mu3 / ATCC 700698).